Here is a 260-residue protein sequence, read N- to C-terminus: Putative protein phosphatase 2C-like protein 44 (260 aa).

Residues Tyr41–Phe259 form the PPM-type phosphatase domain.

It belongs to the PP2C family.

This Arabidopsis thaliana (Mouse-ear cress) protein is Putative protein phosphatase 2C-like protein 44.